An 888-amino-acid polypeptide reads, in one-letter code: Endochitinase A1 (888 aa).

A signal peptide spans 1–22 (MVSSKLSFVATAVAALAPLASA). Residues 29–338 (SNLAIYWGQG…DHMKDILLHC (310 aa)) enclose the GH18 domain. Glutamate 174 (proton donor) is an active-site residue. Disordered stretches follow at residues 338-631 (CDPS…TTTA), 743-799 (PVTE…VSTS), and 813-855 (PLIL…YTQE). Over residues 344-617 (VTSSSAIPSS…STDESSTTVG (274 aa)) the composition is skewed to low complexity. Asparagine 622 carries an N-linked (GlcNAc...) asparagine glycan. Over residues 764–775 (EGSNPTQPSGAS) the composition is skewed to polar residues. Asparagine 780 is a glycosylation site (N-linked (GlcNAc...) asparagine). The segment covering 835-855 (PSGQNSGSSSHVPIPPSYTQE) has biased composition (polar residues). Glycine 863 carries GPI-anchor amidated glycine lipidation. A propeptide spans 864–888 (AASRVTGLGHGLVLTVLTLSAFFVL) (removed in mature form).

The protein belongs to the glycosyl hydrolase 18 family. Chitinase class III subfamily.

Its subcellular location is the cell membrane. It localises to the secreted. The protein resides in the cell wall. The enzyme catalyses Random endo-hydrolysis of N-acetyl-beta-D-glucosaminide (1-&gt;4)-beta-linkages in chitin and chitodextrins.. The cyclic peptide natural product argifin acts as a specific inhibitor. In terms of biological role, GPI-anchored chitinase involved in the degradation of chitin, a component of the cell walls of fungi and exoskeletal elements of some animals (including worms and arthropods). Required to reshape the cell wall at the sites where cell wall remodeling and/or cell wall maturation actively take place such as sites of conidia formation. The polypeptide is Endochitinase A1 (chiA1) (Aspergillus fumigatus (strain ATCC MYA-4609 / CBS 101355 / FGSC A1100 / Af293) (Neosartorya fumigata)).